Reading from the N-terminus, the 911-residue chain is Valine--tRNA ligase (911 aa).

A 'HIGH' region motif is present at residues 57–67 (PTVSGSLHVGH). Positions 599–603 (KMSKS) match the 'KMSKS' region motif. Lys-602 provides a ligand contact to ATP. The disordered stretch occupies residues 882-911 (EESAAEGTPETEVAVEASELGEPPAKKPKH).

The protein belongs to the class-I aminoacyl-tRNA synthetase family. ValS type 2 subfamily. As to quaternary structure, monomer.

It is found in the cytoplasm. It carries out the reaction tRNA(Val) + L-valine + ATP = L-valyl-tRNA(Val) + AMP + diphosphate. In terms of biological role, catalyzes the attachment of valine to tRNA(Val). As ValRS can inadvertently accommodate and process structurally similar amino acids such as threonine, to avoid such errors, it has a 'posttransfer' editing activity that hydrolyzes mischarged Thr-tRNA(Val) in a tRNA-dependent manner. This is Valine--tRNA ligase from Bifidobacterium longum (strain NCC 2705).